The chain runs to 1094 residues: Potassium-transporting ATPase alpha chain 2 (1094 aa).

The segment covering 1–21 (MAGGAHRADRATGEERKEGGG) has biased composition (basic and acidic residues). Residues 1 to 37 (MAGGAHRADRATGEERKEGGGRWRAPHSPSPPGPRGC) form a disordered region. The segment covering 28-37 (SPSPPGPRGC) has biased composition (pro residues). The Cytoplasmic portion of the chain corresponds to 56–157 (RYCTLLLFQR…NALTPPKQTP (102 aa)). Residues 158–178 (EIIKFLKQMVGGFSILLWVGA) form a helical membrane-spanning segment. Over 179–201 (VLCWIAFGIQYVSNPSASLDRVY) the chain is Lumenal. The chain crosses the membrane as a helical span at residues 202 to 222 (LGTVLAVVVILTGIFAYYQEA). The Cytoplasmic segment spans residues 223-358 (KSTNIMASFC…NEKTPIAIEI (136 aa)). The segment at 286–305 (SSLTGESEPQSRSSGFTHEN) is disordered. Residues 359–378 (EHFVHIVAGVAVSVGILFFI) form a helical membrane-spanning segment. The Lumenal portion of the chain corresponds to 379 to 390 (IAVCMKYHVLDA). Residues 391–408 (IIFLIAIIVANVPEGLLA) form a helical membrane-spanning segment. The Cytoplasmic portion of the chain corresponds to 409-842 (TVTVALSLTA…EEGRLIFDNL (434 aa)). Asp446 acts as the 4-aspartylphosphate intermediate in catalysis. 2 residues coordinate Mg(2+): Asp787 and Asp791. Residues 843–862 (KKTIAYTLTKNIAELCPFLI) traverse the membrane as a helical segment. Over 863-872 (YIILGLPLPI) the chain is Lumenal. Residues 873–893 (GTITLLFIDLGTDIIPSIALA) traverse the membrane as a helical segment. Residues 894-913 (YEKAESDIMNRKPRHKKKDR) are Cytoplasmic-facing. A helical transmembrane segment spans residues 914–936 (LVNQQLAVYSYLHIGLMQALGAF). Over 937–988 (LVYFTVYAQQGFRPTSLFHLRIAWDSDHLNDLEDNYGQEWTSYQRQYLEWTG) the chain is Lumenal. Residues 989–1008 (YTAFFVGIMVQQIADLIIRK) traverse the membrane as a helical segment. The Cytoplasmic portion of the chain corresponds to 1009–1022 (TRKNSIFKQGLFRN). Position 1013 is a phosphoserine; by PKA (Ser1013). Residues 1023 to 1041 (KVIWVGIASQIIVALLLSY) traverse the membrane as a helical segment. Topologically, residues 1042 to 1056 (GLGSITALNFTMLKA) are lumenal. Residues 1057–1077 (QYWFVAVPHAILIWVYDEMRK) form a helical membrane-spanning segment. The Cytoplasmic portion of the chain corresponds to 1078 to 1094 (LFIRLYPGSWWDKNMYY).

This sequence belongs to the cation transport ATPase (P-type) (TC 3.A.3) family. Type IIC subfamily. As to quaternary structure, the X(+)/K(+) ATPase pump is composed of a catalytic alpha subunit and an auxiliary non-catalytic beta subunit. The alpha subunit pairs with the beta subunit of gastric H(+)/K(+) ATPase ATP4B or the beta subunit of Na(+)/K(+) ATPases ATP1B1 and ATP1B3; this interaction is required for the formation of a functionally active pump and its targeting at the plasma membrane. Found in the skin, kidney, distal colon and brain. In the kidney it is found in the connecting tubule, cortical collecting duct and outer medullary collecting duct while in the brain it is specific to choroid plexus and cortex.

The protein localises to the apical cell membrane. It catalyses the reaction K(+)(out) + ATP + H2O + H(+)(in) = K(+)(in) + ADP + phosphate + 2 H(+)(out). The catalysed reaction is K(+)(out) + Na(+)(in) + ATP + H2O = K(+)(in) + Na(+)(out) + ADP + phosphate + H(+). The catalytic subunit of a H(+)/K(+) ATPase and/or Na(+)/K(+) ATPase pump which transports K(+) ions in exchange for Na(+) and/or H(+) ions across the apical membrane of epithelial cells. Uses ATP as an energy source to pump K(+) ions into the cell while transporting Na(+) and/or H(+) ions to the extracellular compartment. Involved in the maintenance of electrolyte homeostasis through K(+) ion absorption in kidney and colon. In the airway epithelium, may play a primary role in mucus acidification regulating its viscosity and clearance. The protein is Potassium-transporting ATPase alpha chain 2 (ATP12A) of Oryctolagus cuniculus (Rabbit).